The primary structure comprises 831 residues: MRLPYSWLREVVAVGASGWDVTPGELEQTLLRIGHEVEEVIPLGPVDGPVTVGRVADIEELTGYKKPIRACAVDIGDRQYREIICGATNFAVGDLVVVALPGATLPGGFTISARKAYGRNSDGMICSAAELNLGADHSGILVLPPGAAEPGADGAGVLGLDDVVFHLAITPDRGYCMSVRGLARELACAYDLDFVDPASNSRVPPLPIEGPAWPLTVQPETGVRRFALRPVIGIDPAAVSPWWLQRRLLLCGIRATCPAVDVTNYVMLELGHPMHAHDRNRISGTLGVRFARSGETAVTLDGIERKLDTADVLIVDDAATAAIGGVMGAASTEVRADSTDVLLEAAIWDPAAVSRTQRRLHLPSEAARRYERTVDPAISVAALDRCARLLADIAGGEVSPTLTDWRGDPPCDDWSPPPIRMGVDVPDRIAGVAYPQGTTARRLAQIGAVVTHDGDTLTVTPPSWRPDLRQPADLVEEVLRLEGLEVIPSVLPPAPAGRGLTAGQQRRRTIGRSLALSGYVEILPTPFLPAGVFDLWGLEADDSRRMTTRVLNPLEADRPQLATTLLPALLEALVRNVSRGLVDVALFAIAQVVQPTEQTRGVGLIPVDRRPTDDEIAMLDASLPRQPQHVAAVLAGLREPRGPWGPGRPVEAADAFEAVRIIARASRVDVTLRPAQYLPWHPGRCAQVFVGESSVGHAGQLHPAVIERSGLPKGTCAVELNLDAIPCSAPLPAPRVSPYPAVFQDVSLVVAADIPAQAVADAVRAGAGDLLEDIALFDVFTGPQIGEHRKSLTFALRFRAPDRTLTEDDASAARDAAVQSAAERVGAVLRG.

A tRNA-binding domain is found at 44–155 (GPVDGPVTVG…GAAEPGADGA (112 aa)). One can recognise a B5 domain in the interval 414–489 (WSPPPIRMGV…RLEGLEVIPS (76 aa)). Positions 467, 473, 476, and 477 each coordinate Mg(2+). One can recognise an FDX-ACB domain in the interval 737-830 (SPYPAVFQDV…AAERVGAVLR (94 aa)).

The protein belongs to the phenylalanyl-tRNA synthetase beta subunit family. Type 1 subfamily. In terms of assembly, tetramer of two alpha and two beta subunits. Requires Mg(2+) as cofactor.

The protein resides in the cytoplasm. The catalysed reaction is tRNA(Phe) + L-phenylalanine + ATP = L-phenylalanyl-tRNA(Phe) + AMP + diphosphate + H(+). This Mycobacterium tuberculosis (strain ATCC 25618 / H37Rv) protein is Phenylalanine--tRNA ligase beta subunit (pheT).